Reading from the N-terminus, the 93-residue chain is YcgL domain-containing protein swp_2294 (93 aa).

Positions 1 to 85 (MICAVYKSLR…PVVNLLEQHK (85 aa)) constitute a YcgL domain.

In Shewanella piezotolerans (strain WP3 / JCM 13877), this protein is YcgL domain-containing protein swp_2294.